The primary structure comprises 276 residues: Proteasome subunit beta type-8 (276 aa).

A disordered region spans residues 1 to 33 (MALLDVCGAPRGQRPESALPVAGSGRRSDPGHY). A propeptide spans 1-72 (MALLDVCGAP…RNVQIEMAHG (72 aa)) (removed in mature form). Asp5 is subject to Phosphothreonine. The active-site Nucleophile is Thr73.

This sequence belongs to the peptidase T1B family. In terms of assembly, the 26S proteasome consists of a 20S proteasome core and two 19S regulatory subunits. The 20S proteasome core is composed of 28 subunits that are arranged in four stacked rings, resulting in a barrel-shaped structure. The two end rings are each formed by seven alpha subunits, and the two central rings are each formed by seven beta subunits. The catalytic chamber with the active sites is on the inside of the barrel. Component of the immunoproteasome, where it displaces the equivalent housekeeping subunit PSMB5. Component of the spermatoproteasome, a form of the proteasome specifically found in testis. Directly interacts with POMP. Interacts with TAP1. (Microbial infection) Interacts with HIV-1 TAT protein. Post-translationally, autocleaved. The resulting N-terminal Thr residue of the mature subunit is responsible for the nucleophile proteolytic activity.

It localises to the cytoplasm. Its subcellular location is the nucleus. The catalysed reaction is Cleavage of peptide bonds with very broad specificity.. In terms of biological role, the proteasome is a multicatalytic proteinase complex which is characterized by its ability to cleave peptides with Arg, Phe, Tyr, Leu, and Glu adjacent to the leaving group at neutral or slightly basic pH. The proteasome has an ATP-dependent proteolytic activity. This subunit is involved in antigen processing to generate class I binding peptides. Replacement of PSMB5 by PSMB8 increases the capacity of the immunoproteasome to cleave model peptides after hydrophobic and basic residues. Involved in the generation of spliced peptides resulting from the ligation of two separate proteasomal cleavage products that are not contiguous in the parental protein. Acts as a major component of interferon gamma-induced sensitivity. Plays a key role in apoptosis via the degradation of the apoptotic inhibitor MCL1. May be involved in the inflammatory response pathway. In cancer cells, substitution of isoform 1 (E2) by isoform 2 (E1) results in immunoproteasome deficiency. Required for the differentiation of preadipocytes into adipocytes. The chain is Proteasome subunit beta type-8 (PSMB8) from Homo sapiens (Human).